The chain runs to 154 residues: Large ribosomal subunit protein uL16 (154 aa).

Belongs to the universal ribosomal protein uL16 family. In terms of assembly, part of the 50S ribosomal subunit.

In terms of biological role, binds 23S rRNA and is also seen to make contacts with the A and possibly P site tRNAs. The polypeptide is Large ribosomal subunit protein uL16 (Synechococcus sp. (strain RCC307)).